The chain runs to 95 residues: MSVDAATVRRIAQLARIAVTDAEVPHLQGELNAMLNFVEQLSEVNVEGVEPMTSVTPMAMKKRQDVVNDGEIADDIVKNAPATENHFFLVPKVVE.

The protein belongs to the GatC family. In terms of assembly, heterotrimer of A, B and C subunits.

The catalysed reaction is L-glutamyl-tRNA(Gln) + L-glutamine + ATP + H2O = L-glutaminyl-tRNA(Gln) + L-glutamate + ADP + phosphate + H(+). It carries out the reaction L-aspartyl-tRNA(Asn) + L-glutamine + ATP + H2O = L-asparaginyl-tRNA(Asn) + L-glutamate + ADP + phosphate + 2 H(+). Allows the formation of correctly charged Asn-tRNA(Asn) or Gln-tRNA(Gln) through the transamidation of misacylated Asp-tRNA(Asn) or Glu-tRNA(Gln) in organisms which lack either or both of asparaginyl-tRNA or glutaminyl-tRNA synthetases. The reaction takes place in the presence of glutamine and ATP through an activated phospho-Asp-tRNA(Asn) or phospho-Glu-tRNA(Gln). The polypeptide is Aspartyl/glutamyl-tRNA(Asn/Gln) amidotransferase subunit C (Bradyrhizobium sp. (strain BTAi1 / ATCC BAA-1182)).